We begin with the raw amino-acid sequence, 427 residues long: Putative F-box/FBD/LRR-repeat protein At4g13965 (427 aa).

Residues 13–61 (ADRISQLPEALIIQILSLLPTEVAVTTSVLSKQWQFLWKMLPKLNFDSL) form the F-box domain. LRR repeat units follow at residues 67-93 (FKTFSKNVKRALLSHKAPVLHSLHLIV), 98-122 (CNSMNTAKLIGIAFACNLRKLVLEV), 141-168 (TLELKYSILMDVPSSICLKSLRTLHLHY), 169-194 (VDFKDNESALNLLSGCPNLENLVVHR), 213-241 (LTIYTSSTVDPRAGYVINSPSLTYLKIVG), and 258-284 (SMIVSSQIINKNLLESLTSVKRLFLEF). The region spanning 346–396 (KWNKPKIVPECLLFHLETFMWKGYEWKRNDETEVAKYILSNTNRLKRATFF) is the FBD domain.

The sequence is that of Putative F-box/FBD/LRR-repeat protein At4g13965 from Arabidopsis thaliana (Mouse-ear cress).